A 216-amino-acid polypeptide reads, in one-letter code: GTP cyclohydrolase 1 (216 aa).

Zn(2+) is bound by residues Cys108, His111, and Cys179.

Belongs to the GTP cyclohydrolase I family. In terms of assembly, toroid-shaped homodecamer, composed of two pentamers of five dimers.

It catalyses the reaction GTP + H2O = 7,8-dihydroneopterin 3'-triphosphate + formate + H(+). It participates in cofactor biosynthesis; 7,8-dihydroneopterin triphosphate biosynthesis; 7,8-dihydroneopterin triphosphate from GTP: step 1/1. The chain is GTP cyclohydrolase 1 from Shewanella sp. (strain ANA-3).